Consider the following 712-residue polypeptide: Lactoperoxidase (712 aa).

A signal peptide spans 1–21 (MLVCLHLQVFLASVALFEVAA). The propeptide occupies 22 to 117 (SDTIAQAAST…TDPSLDLTAL (96 aa)). A glycan (N-linked (GlcNAc...) (complex) asparagine; alternate) is linked at Asn106. Asn106 carries an N-linked (GlcNAc...) (hybrid) asparagine; alternate glycan. 4 cysteine pairs are disulfide-bonded: Cys123–Cys284, Cys132–Cys145, Cys246–Cys256, and Cys250–Cys274. The N-linked (GlcNAc...) (complex) asparagine; alternate glycan is linked to Asn212. Residue Asn212 is glycosylated (N-linked (GlcNAc...) (hybrid) asparagine; alternate). Heme b is bound at residue Asp225. The active-site Proton acceptor is His226. Ca(2+) is bound at residue Asp227. Residues Thr301, Phe303, Asp305, and Ser307 each coordinate Ca(2+). Ser315 is modified (phosphoserine). N-linked (GlcNAc...) (high mannose) asparagine glycosylation occurs at Asn322. Cys354 and Cys365 form a disulfide bridge. Asn358 carries N-linked (GlcNAc...) asparagine glycosylation. Heme b is bound at residue Glu375. Asn449 carries an N-linked (GlcNAc...) (complex) asparagine; alternate glycan. Asn449 carries N-linked (GlcNAc...) (hybrid) asparagine; alternate glycosylation. Residue Asn449 is glycosylated (N-linked (GlcNAc...) (high mannose) asparagine; alternate). Position 468 (His468) interacts with heme b. Tyr482 carries the post-translational modification 3'-nitrotyrosine. 2 disulfides stabilise this stretch: Cys573/Cys630 and Cys671/Cys696.

The protein belongs to the peroxidase family. XPO subfamily. Ca(2+) is required as a cofactor. The cofactor is heme b. Mammary gland; milk.

It localises to the secreted. The protein localises to the cytoplasm. The enzyme catalyses 2 a phenolic donor + H2O2 = 2 a phenolic radical donor + 2 H2O. It catalyses the reaction thiocyanate + H2O2 + H(+) = hypothiocyanous acid + H2O. It carries out the reaction iodide + H2O2 = hypoiodite + H2O. Its activity is regulated as follows. Inhibited by small molecule methimazole (MMZ). Heme-containing oxidoreductase which catalyzes the conversion of thiocyanate (SCN(-)) into antimicrobial agent hypothiocyanous acid (OSCN(-)) in the presence of hydrogen peroxide (H2O2). Also involved in the conversion of iodide (I(-)) into hypoiodite (IO(-)) in the presence of H2O2. Responsible for the inactivation of a wide range of micro-organisms and hence, important component of defense mechanism. Shows antibacterial properties against several Gram-positive bacteria including some Staphylococcus species and Gram-negative bacteria including E.coli, P.aeruginosa and some Salmonella species. Inhibits the growth of several fungi including A.niger, Trichoderma species, C.cassicola, P.meadii and C.salmonicolor. Does not have anti-fungal activity towards C.albicans and Pythium species. May protect the udder from infection and may promote growth in newborns. May be implicated in airway host defense against infection. May contribute to maintaining an appropriate H2O2 cellular level, therefore protecting cells from H2O2-caused injuries and inflammation. The sequence is that of Lactoperoxidase (LPO) from Capra hircus (Goat).